The sequence spans 329 residues: MEVPEPSSPTEEEEEEEEHSAEPRPRTRSNPEGAEDRAVGAQASVGSRSEGEGEAASADDGSPNTSGAGPKSWQVPPPAPEVQIRTPRVNCPEKVIICLDLSEEMSLPKLESFNGSKTNALNVSQKMIEMFVRTKHKIDKSHEFALVVVNDDTAWLSGLTSDPRELCSCLYDLETASCSTFNLEGLFSLIQQKTELPVTENVQTIPPPYVVRTILVYSRPPCQPQFSLTEPMKKMFQCPYFFFDVVYIHNGTEEKEEEMSWKDMFAFMGSLDTKGTSYKYEVALAGPALELHNCMAKLLAHPLQRPCQSHASYSLLEEEDEATEVEATV.

Methionine 1 bears the N-acetylmethionine mark. A disordered region spans residues 1 to 84 (MEVPEPSSPT…VPPPAPEVQI (84 aa)). Residue serine 8 is modified to Phosphoserine. The span at 10-19 (TEEEEEEEEH) shows a compositional bias: acidic residues. A phosphoserine mark is found at serine 29, serine 49, serine 57, and serine 62. Threonine 65 is subject to Phosphothreonine. Position 66 is a phosphoserine (serine 66). Residues 95-298 (VIICLDLSEE…LELHNCMAKL (204 aa)) form a VWFA-like region.

It belongs to the BABAM1 family. Component of the ARISC complex, at least composed of UIMC1/RAP80, ABRAXAS1, BRCC3/BRCC36, BABAM2 and BABAM1/NBA1. Component of the BRCA1-A complex, at least composed of BRCA1, BARD1, UIMC1/RAP80, ABRAXAS1, BRCC3/BRCC36, BABAM2 and BABAM1/NBA1. In the BRCA1-A complex, interacts directly with ABRAXAS1 and BABAM2. Component of the BRISC complex, at least composed of ABRAXAS2, BRCC3/BRCC36, BABAM2 and BABAM1/NBA1. Identified in a complex with SHMT2 and the other subunits of the BRISC complex.

The protein localises to the cytoplasm. Its subcellular location is the nucleus. Functionally, component of the BRCA1-A complex, a complex that specifically recognizes 'Lys-63'-linked ubiquitinated histones H2A and H2AX at DNA lesions sites, leading to target the BRCA1-BARD1 heterodimer to sites of DNA damage at double-strand breaks (DSBs). The BRCA1-A complex also possesses deubiquitinase activity that specifically removes 'Lys-63'-linked ubiquitin on histones H2A and H2AX. In the BRCA1-A complex, it is required for the complex integrity and its localization at DSBs. Component of the BRISC complex, a multiprotein complex that specifically cleaves 'Lys-63'-linked ubiquitin in various substrates. In these 2 complexes, it is probably required to maintain the stability of BABAM2 and help the 'Lys-63'-linked deubiquitinase activity mediated by BRCC3/BRCC36 component. The BRISC complex is required for normal mitotic spindle assembly and microtubule attachment to kinetochores via its role in deubiquitinating NUMA1. Plays a role in interferon signaling via its role in the deubiquitination of the interferon receptor IFNAR1; deubiquitination increases IFNAR1 activity by enhancing its stability and cell surface expression. Down-regulates the response to bacterial lipopolysaccharide (LPS) via its role in IFNAR1 deubiquitination. The chain is BRISC and BRCA1-A complex member 1 (BABAM1) from Pongo abelii (Sumatran orangutan).